The chain runs to 507 residues: Aldehyde dehydrogenase 1, mitochondrial (507 aa).

Residues 1–21 constitute a mitochondrion transit peptide; sequence MLATRNLVPIIRASIKWRIKL. Residue 266-271 coordinates NAD(+); sequence GSTLVG. Residues E289 and C323 contribute to the active site.

Belongs to the aldehyde dehydrogenase family. As to quaternary structure, homotetramer.

It localises to the mitochondrion matrix. It carries out the reaction an aldehyde + NAD(+) + H2O = a carboxylate + NADH + 2 H(+). It functions in the pathway alcohol metabolism; ethanol degradation; acetate from ethanol: step 2/2. The protein is Aldehyde dehydrogenase 1, mitochondrial (ALD1) of Saccharomyces cerevisiae (Baker's yeast).